Here is a 369-residue protein sequence, read N- to C-terminus: Biotin synthase (369 aa).

The Radical SAM core domain occupies asparagine 51–lysine 269. [4Fe-4S] cluster contacts are provided by cysteine 66, cysteine 70, and cysteine 73. [2Fe-2S] cluster is bound by residues cysteine 110, cysteine 141, cysteine 201, and arginine 273.

This sequence belongs to the radical SAM superfamily. Biotin synthase family. In terms of assembly, homodimer. [4Fe-4S] cluster is required as a cofactor. [2Fe-2S] cluster serves as cofactor.

The enzyme catalyses (4R,5S)-dethiobiotin + (sulfur carrier)-SH + 2 reduced [2Fe-2S]-[ferredoxin] + 2 S-adenosyl-L-methionine = (sulfur carrier)-H + biotin + 2 5'-deoxyadenosine + 2 L-methionine + 2 oxidized [2Fe-2S]-[ferredoxin]. Its pathway is cofactor biosynthesis; biotin biosynthesis; biotin from 7,8-diaminononanoate: step 2/2. Functionally, catalyzes the conversion of dethiobiotin (DTB) to biotin by the insertion of a sulfur atom into dethiobiotin via a radical-based mechanism. This Pseudoalteromonas atlantica (strain T6c / ATCC BAA-1087) protein is Biotin synthase.